A 223-amino-acid chain; its full sequence is NADH-quinone oxidoreductase subunit C (223 aa).

It belongs to the complex I 30 kDa subunit family. NDH-1 is composed of 14 different subunits. Subunits NuoB, C, D, E, F, and G constitute the peripheral sector of the complex.

The protein resides in the cell inner membrane. The catalysed reaction is a quinone + NADH + 5 H(+)(in) = a quinol + NAD(+) + 4 H(+)(out). In terms of biological role, NDH-1 shuttles electrons from NADH, via FMN and iron-sulfur (Fe-S) centers, to quinones in the respiratory chain. The immediate electron acceptor for the enzyme in this species is believed to be ubiquinone. Couples the redox reaction to proton translocation (for every two electrons transferred, four hydrogen ions are translocated across the cytoplasmic membrane), and thus conserves the redox energy in a proton gradient. The chain is NADH-quinone oxidoreductase subunit C from Hydrogenovibrio crunogenus (strain DSM 25203 / XCL-2) (Thiomicrospira crunogena).